The sequence spans 420 residues: 3-isopropylmalate dehydratase large subunit (420 aa).

3 residues coordinate [4Fe-4S] cluster: C300, C360, and C363.

It belongs to the aconitase/IPM isomerase family. LeuC type 2 subfamily. As to quaternary structure, heterodimer of LeuC and LeuD. [4Fe-4S] cluster serves as cofactor.

It catalyses the reaction (2R,3S)-3-isopropylmalate = (2S)-2-isopropylmalate. It participates in amino-acid biosynthesis; L-leucine biosynthesis; L-leucine from 3-methyl-2-oxobutanoate: step 2/4. In terms of biological role, catalyzes the isomerization between 2-isopropylmalate and 3-isopropylmalate, via the formation of 2-isopropylmaleate. The sequence is that of 3-isopropylmalate dehydratase large subunit from Syntrophus aciditrophicus (strain SB).